The chain runs to 366 residues: Structure-specific endonuclease subunit SLX1 (366 aa).

Residues 14 to 95 (AFYCCYLLRS…QNTHATRHID (82 aa)) enclose the GIY-YIG domain. Disordered stretches follow at residues 31 to 59 (IGST…SMQG) and 102 to 124 (RAEE…KRPP). The span at 109–123 (GKKKATSPGRRRKRP) shows a compositional bias: basic residues. An SLX1-type zinc finger spans residues 234–289 (CGVCKNPADMSSSLILVCPIEACQTVSHLSCLSNKFLTEGGELETLVPLEGTCPGC). Residues 317 to 366 (KPKRKRKSDNPAESDAADGQALEQEDEELDETWMEDMSQDEEPSPVKKSR) are disordered. Over residues 339–359 (EQEDEELDETWMEDMSQDEEP) the composition is skewed to acidic residues.

It belongs to the SLX1 family. In terms of assembly, forms a heterodimer with SLX4. A divalent metal cation serves as cofactor.

The protein resides in the nucleus. Functionally, catalytic subunit of the SLX1-SLX4 structure-specific endonuclease that resolves DNA secondary structures generated during DNA repair and recombination. Has endonuclease activity towards branched DNA substrates, introducing single-strand cuts in duplex DNA close to junctions with ss-DNA. In Phaeosphaeria nodorum (strain SN15 / ATCC MYA-4574 / FGSC 10173) (Glume blotch fungus), this protein is Structure-specific endonuclease subunit SLX1.